Consider the following 94-residue polypeptide: Co-chaperonin GroES (94 aa).

Belongs to the GroES chaperonin family. Heptamer of 7 subunits arranged in a ring. Interacts with the chaperonin GroEL.

It localises to the cytoplasm. Together with the chaperonin GroEL, plays an essential role in assisting protein folding. The GroEL-GroES system forms a nano-cage that allows encapsulation of the non-native substrate proteins and provides a physical environment optimized to promote and accelerate protein folding. GroES binds to the apical surface of the GroEL ring, thereby capping the opening of the GroEL channel. The polypeptide is Co-chaperonin GroES (Bacillus cereus (strain ZK / E33L)).